A 962-amino-acid polypeptide reads, in one-letter code: Leucine--tRNA ligase (962 aa).

The 'HIGH' region motif lies at 68–79 (PYPSGAGLHVGH). Residues 559–582 (DYSPRTFDPDDANTSPETPLSRNE) are disordered. The segment covering 570-579 (ANTSPETPLS) has biased composition (polar residues). Residues 733-737 (KMGKS) carry the 'KMSKS' region motif. Lys-736 provides a ligand contact to ATP.

Belongs to the class-I aminoacyl-tRNA synthetase family.

It localises to the cytoplasm. The enzyme catalyses tRNA(Leu) + L-leucine + ATP = L-leucyl-tRNA(Leu) + AMP + diphosphate. This Streptomyces avermitilis (strain ATCC 31267 / DSM 46492 / JCM 5070 / NBRC 14893 / NCIMB 12804 / NRRL 8165 / MA-4680) protein is Leucine--tRNA ligase.